A 256-amino-acid polypeptide reads, in one-letter code: LexA repressor (256 aa).

Residues M1–P31 are disordered. The segment at residues V53–K73 is a DNA-binding region (H-T-H motif). Catalysis depends on for autocatalytic cleavage activity residues S180 and K217.

The protein belongs to the peptidase S24 family. In terms of assembly, homodimer.

The catalysed reaction is Hydrolysis of Ala-|-Gly bond in repressor LexA.. Represses a number of genes involved in the response to DNA damage (SOS response), including recA and lexA. In the presence of single-stranded DNA, RecA interacts with LexA causing an autocatalytic cleavage which disrupts the DNA-binding part of LexA, leading to derepression of the SOS regulon and eventually DNA repair. The chain is LexA repressor from Frankia casuarinae (strain DSM 45818 / CECT 9043 / HFP020203 / CcI3).